Reading from the N-terminus, the 88-residue chain is Alpha-latrotoxin associated low molecular weight protein (88 aa).

A signal peptide spans 1 to 18 (MSKLFFVAFLCLIISVFA).

The protein belongs to the arthropod CHH/MIH/GIH/VIH hormone family. In terms of tissue distribution, expressed by the venom gland.

The protein localises to the secreted. In terms of biological role, may increase the toxicity of alpha-latrotoxin and/or other venom components. Is non-toxic to mice and to the cockroach Periplaneta americana. This Latrodectus hesperus (Western black widow spider) protein is Alpha-latrotoxin associated low molecular weight protein.